We begin with the raw amino-acid sequence, 316 residues long: Pleckstrin homology domain-containing family F member 1 homolog (316 aa).

The 97-residue stretch at 35–131 folds into the PH domain; that stretch reads VLVGEGVLTK…WMAHINKCVE (97 aa). An FYVE-type zinc finger spans residues 152 to 212; the sequence is DTDASVCMHC…VCDACYERLK (61 aa). Zn(2+) is bound by residues Cys158, Cys161, Cys175, Cys178, Cys183, Cys186, Cys204, and Cys207. Residues 215-316 form a disordered region; it reads PSSLGSGEDS…AAVATTGSHC (102 aa). Over residues 244–253 the composition is skewed to acidic residues; the sequence is SNDEDSDEET. The span at 279-292 shows a compositional bias: low complexity; the sequence is SSTITSPSSATTGS. Residues 298 to 316 show a composition bias toward polar residues; it reads VTPSVQSSPAAVATTGSHC.

Interacts with Gdi (Rab GDP dissociation inhibitor). As to expression, in ovaries, expressed both in the germ line cells and in the overlying somatic follicular epithelium.

The protein localises to the apical cell membrane. It localises to the endosome membrane. The protein resides in the cytoplasm. Its subcellular location is the cell cortex. In terms of biological role, functions in the regulation of endosome morphology and late endosome formation. Has a role in controlling trafficking from early to late endosomes and from late endosomes to lysosomes. Important for localization of Gdi to the endosomal membranes. May function in controlling the activity of multiple regulators in the endocytic pathway, perhaps by positively controlling those involved in the early steps of endocytosis such as Rab5 and hrs, and negative regulating those involved in the late stages of endocytosis like car and VhaSFD. The chain is Pleckstrin homology domain-containing family F member 1 homolog from Drosophila melanogaster (Fruit fly).